Here is a 201-residue protein sequence, read N- to C-terminus: Heat shock protein beta-1 (201 aa).

Position 15 is a phosphoserine; by PKA and PKC (Ser15). The region spanning 83-193 is the sHSP domain; the sequence is ALSRQMSSGM…SETTIPVNVE (111 aa).

This sequence belongs to the small heat shock protein (HSP20) family. As to quaternary structure, homooligomer. Homodimer; becomes monomeric upon activation. Heterooligomer.

The protein resides in the cytoplasm. The protein localises to the nucleus. It localises to the cytoskeleton. It is found in the spindle. Small heat shock protein which functions as a molecular chaperone probably maintaining denatured proteins in a folding-competent state. Plays a role in stress resistance and actin organization. The chain is Heat shock protein beta-1 (hspb1) from Poeciliopsis lucida (Desert topminnow).